We begin with the raw amino-acid sequence, 41 residues long: Photosystem II reaction center protein Y (41 aa).

A helical transmembrane segment spans residues 7 to 25 (IAIVLAPVVIAASWAVFNI).

Belongs to the PsbY family. PSII is composed of 1 copy each of membrane proteins PsbA, PsbB, PsbC, PsbD, PsbE, PsbF, PsbH, PsbI, PsbJ, PsbK, PsbL, PsbM, PsbT, PsbX, PsbY, PsbZ, Psb30/Ycf12, peripheral proteins PsbO, CyanoQ (PsbQ), PsbU, PsbV and a large number of cofactors. It forms dimeric complexes.

The protein localises to the cellular thylakoid membrane. Its function is as follows. Loosely associated component of the core of photosystem II (PSII), it is not always seen in crystals. PSII is a light-driven water plastoquinone oxidoreductase, using light energy to abstract electrons from H(2)O, generating a proton gradient subsequently used for ATP formation. This is Photosystem II reaction center protein Y from Nostoc punctiforme (strain ATCC 29133 / PCC 73102).